A 305-amino-acid polypeptide reads, in one-letter code: Ribonuclease BN (305 aa).

The Zn(2+) site is built by His63, His65, Asp67, His68, His141, Asp212, and His270. Asp67 serves as the catalytic Proton acceptor.

Belongs to the RNase Z family. RNase BN subfamily. In terms of assembly, homodimer. Zn(2+) serves as cofactor.

Its function is as follows. Zinc phosphodiesterase, which has both exoribonuclease and endoribonuclease activities. This chain is Ribonuclease BN, found in Proteus mirabilis (strain HI4320).